Here is a 541-residue protein sequence, read N- to C-terminus: Tripeptidyl aminopeptidase (541 aa).

The first 36 residues, 1–36, serve as a signal peptide directing secretion; that stretch reads MRKSSIRRRATAFGTAGALVTATLIAGAVSAPAASA. Positions 37–39 are excised as a propeptide; it reads APA. The AB hydrolase-1 domain maps to 123–501; sequence GALIYNPGGP…SRLITERDAG (379 aa). Serine 249 serves as the catalytic Nucleophile. Residue aspartate 474 is part of the active site. Histidine 503 acts as the Proton donor in catalysis.

It belongs to the peptidase S33 family.

The protein resides in the secreted. In terms of biological role, cleaves tripeptides from the N-termini of proteins. Does not cleave mono- or dipeptides, or N-terminally blocked peptides. The sequence is that of Tripeptidyl aminopeptidase from Streptomyces coelicolor (strain ATCC BAA-471 / A3(2) / M145).